Reading from the N-terminus, the 367-residue chain is Apolipoprotein A-V (367 aa).

An N-terminal signal peptide occupies residues 1–20; the sequence is MVAVLTWALALLSAFATVQT. Ser-56 carries the post-translational modification Phosphoserine. The tract at residues 71 to 90 is disordered; sequence LGPLSGQGREPPGLPHDPEG.

Belongs to the apolipoprotein A1/A4/E family. Interacts with GPIHBP1. Interacts with SORL1; this interaction leads to APOA5 internalization and sorting either to lysosomes and degradation, or to the trans-Golgi network. In terms of processing, phosphorylated by FAM20C in the extracellular medium.

It localises to the secreted. The protein resides in the early endosome. The protein localises to the late endosome. It is found in the golgi apparatus. Its subcellular location is the trans-Golgi network. Its function is as follows. Minor apolipoprotein mainly associated with HDL and to a lesser extent with VLDL. May also be associated with chylomicrons. Important determinant of plasma triglyceride (TG) levels by both being a potent stimulator of apo-CII lipoprotein lipase (LPL) TG hydrolysis and an inhibitor of the hepatic VLDL-TG production rate (without affecting the VLDL-apoB production rate). Activates poorly lecithin:cholesterol acyltransferase (LCAT) and does not enhance efflux of cholesterol from macrophages. Binds heparin. The protein is Apolipoprotein A-V (APOA5) of Neomonachus schauinslandi (Hawaiian monk seal).